The chain runs to 394 residues: Phosphoglycerate kinase (394 aa).

Substrate-binding positions include 21–23 (DFN), arginine 36, 59–62 (HFGR), arginine 118, and arginine 151. Residues lysine 201, glutamate 323, and 349–352 (GGDS) each bind ATP.

The protein belongs to the phosphoglycerate kinase family. In terms of assembly, monomer.

The protein localises to the cytoplasm. It catalyses the reaction (2R)-3-phosphoglycerate + ATP = (2R)-3-phospho-glyceroyl phosphate + ADP. It participates in carbohydrate degradation; glycolysis; pyruvate from D-glyceraldehyde 3-phosphate: step 2/5. In Brevibacillus brevis (strain 47 / JCM 6285 / NBRC 100599), this protein is Phosphoglycerate kinase.